The chain runs to 252 residues: Ribonuclease HII (252 aa).

The RNase H type-2 domain maps to 68-252 (EYVAGLDEVG…FGPVRDRLRS (185 aa)). Positions 74, 75, and 165 each coordinate a divalent metal cation.

This sequence belongs to the RNase HII family. Mn(2+) serves as cofactor. It depends on Mg(2+) as a cofactor.

The protein localises to the cytoplasm. It carries out the reaction Endonucleolytic cleavage to 5'-phosphomonoester.. Functionally, endonuclease that specifically degrades the RNA of RNA-DNA hybrids. The protein is Ribonuclease HII of Lacticaseibacillus paracasei (strain ATCC 334 / BCRC 17002 / CCUG 31169 / CIP 107868 / KCTC 3260 / NRRL B-441) (Lactobacillus paracasei).